We begin with the raw amino-acid sequence, 156 residues long: Ribosomal RNA large subunit methyltransferase H (156 aa).

S-adenosyl-L-methionine-binding positions include L73, G104, and 123–128 (LSALTL).

It belongs to the RNA methyltransferase RlmH family. As to quaternary structure, homodimer.

The protein localises to the cytoplasm. The catalysed reaction is pseudouridine(1915) in 23S rRNA + S-adenosyl-L-methionine = N(3)-methylpseudouridine(1915) in 23S rRNA + S-adenosyl-L-homocysteine + H(+). Its function is as follows. Specifically methylates the pseudouridine at position 1915 (m3Psi1915) in 23S rRNA. The protein is Ribosomal RNA large subunit methyltransferase H of Shewanella woodyi (strain ATCC 51908 / MS32).